The chain runs to 593 residues: Cytochrome c oxidase polypeptide 1 (593 aa).

Helical transmembrane passes span 5–25 (ASSITLTVLMGVLLVGVVAVL) and 71–91 (IGILYGVYGTIAFAWGGVSVL). A Fe(II)-heme a-binding site is contributed by histidine 117. Helical transmembrane passes span 122 to 142 (LFLFGTPMIAAFGNYFIPLLI), 154 to 174 (AIAFWLLPPGAILIWSGFLIP), 204 to 224 (GLHLTGVSATMGAINFIATIF), 246 to 266 (QSGLILFAFPLFGSALIMLLL), 288 to 308 (LFWFFGHPEVYVLVLPPMGIV), and 320 to 340 (LFGFKFVVYSTLAIGVLSFGV). Cu cation is bound by residues histidine 294 and tyrosine 298. A cross-link (1'-histidyl-3'-tyrosine (His-Tyr)) is located at residues 294 to 298 (HPEVY). Cu cation is bound by residues histidine 343 and histidine 344. The next 5 membrane-spanning stretches (helical) occupy residues 358-378 (FMAVSLAISIPSAVKVFNWIT), 401-421 (FIIGGVTGVFLAVIPIDLILH), 425-445 (YVVGHFHFIVYGAIGFALFAA), 467-487 (FWTALVGSNATFLAMLWLGYG), and 506-526 (LATVGAFLIGVSTLIWLFNMA). Histidine 429 is a heme a3 binding site. Histidine 431 serves as a coordination point for Fe(II)-heme a. The segment at 562-593 (TTVLPDGGDEAQSEADAVTDGGQPAADSDTES) is disordered.

The protein belongs to the heme-copper respiratory oxidase family.

It localises to the cell membrane. It catalyses the reaction 4 Fe(II)-[cytochrome c] + O2 + 8 H(+)(in) = 4 Fe(III)-[cytochrome c] + 2 H2O + 4 H(+)(out). The protein operates within energy metabolism; oxidative phosphorylation. Its function is as follows. Cytochrome c oxidase is the component of the respiratory chain that catalyzes the reduction of oxygen to water. Subunits 1-3 form the functional core of the enzyme complex. CO I is the catalytic subunit of the enzyme. Electrons originating in cytochrome c are transferred via the copper A center of subunit 2 and heme A of subunit 1 to the bimetallic center formed by heme A3 and copper B. This chain is Cytochrome c oxidase polypeptide 1 (coxA2), found in Halobacterium salinarum (strain ATCC 700922 / JCM 11081 / NRC-1) (Halobacterium halobium).